The sequence spans 38 residues: Large ribosomal subunit protein bL36 (38 aa).

The protein belongs to the bacterial ribosomal protein bL36 family.

This is Large ribosomal subunit protein bL36 from Chlorobium phaeobacteroides (strain BS1).